A 429-amino-acid chain; its full sequence is Gamma-glutamyl phosphate reductase (429 aa).

Belongs to the gamma-glutamyl phosphate reductase family.

Its subcellular location is the cytoplasm. It catalyses the reaction L-glutamate 5-semialdehyde + phosphate + NADP(+) = L-glutamyl 5-phosphate + NADPH + H(+). The protein operates within amino-acid biosynthesis; L-proline biosynthesis; L-glutamate 5-semialdehyde from L-glutamate: step 2/2. Catalyzes the NADPH-dependent reduction of L-glutamate 5-phosphate into L-glutamate 5-semialdehyde and phosphate. The product spontaneously undergoes cyclization to form 1-pyrroline-5-carboxylate. This chain is Gamma-glutamyl phosphate reductase, found in Bradyrhizobium sp. (strain ORS 278).